We begin with the raw amino-acid sequence, 134 residues long: MGLIIDTSIIIALERGKVSTKQWSHYGQAYISPIVLTELLIGVDRVNNENKRIKCLAFIEYVKSLFTILPFGIEEVYTYARIINDLYKQRITIGTHDMLIAATAITHGYSLLTLNVKDFKRIQGLEVLTVSSKD.

The 120-residue stretch at 4–123 folds into the PINc domain; that stretch reads IIDTSIIIAL…LNVKDFKRIQ (120 aa). Positions 6 and 97 each coordinate Mg(2+).

The protein belongs to the PINc/VapC protein family. It depends on Mg(2+) as a cofactor.

Its function is as follows. Toxic component of a type II toxin-antitoxin (TA) system. Has ssRNase activity. Upon expression in E.coli inhibits growth in liquid culture; this toxic effect is neutralized by coexpression with cognate antitoxin VapB1. Its RNase activity is partially inhibited in vitro by VapB1. This is Ribonuclease VapC1 from Rickettsia felis (strain ATCC VR-1525 / URRWXCal2) (Rickettsia azadi).